We begin with the raw amino-acid sequence, 238 residues long: uncharacterized protein (238 aa).

Helical transmembrane passes span 19 to 39 (FIYG…LLGW), 64 to 84 (WSVI…IYNW), 85 to 105 (QVLY…YFTK), 112 to 132 (LWND…SYYF), 141 to 161 (ILWV…YVKS), 176 to 196 (VIFH…ILAL), and 218 to 238 (VGLI…VATL).

The protein to B.subtilis YwiC.

It localises to the cell membrane. This is an uncharacterized protein from Haemophilus influenzae (strain ATCC 51907 / DSM 11121 / KW20 / Rd).